A 271-amino-acid chain; its full sequence is Orotidine 5'-phosphate decarboxylase (271 aa).

Catalysis depends on Lys-97, which acts as the Proton donor.

The protein belongs to the OMP decarboxylase family. Type 2 subfamily.

It carries out the reaction orotidine 5'-phosphate + H(+) = UMP + CO2. The protein operates within pyrimidine metabolism; UMP biosynthesis via de novo pathway; UMP from orotate: step 2/2. The chain is Orotidine 5'-phosphate decarboxylase from Leptospira borgpetersenii serovar Hardjo-bovis (strain L550).